Reading from the N-terminus, the 202-residue chain is LexA repressor 2 (202 aa).

Residues 28 to 48 constitute a DNA-binding region (H-T-H motif); the sequence is LAEISEAFGFASRSVARKHIV. Residues S123 and K160 each act as for autocatalytic cleavage activity in the active site.

Belongs to the peptidase S24 family. In terms of assembly, homodimer.

It catalyses the reaction Hydrolysis of Ala-|-Gly bond in repressor LexA.. Represses a number of genes involved in the response to DNA damage (SOS response), including recA and lexA. In the presence of single-stranded DNA, RecA interacts with LexA causing an autocatalytic cleavage which disrupts the DNA-binding part of LexA, leading to derepression of the SOS regulon and eventually DNA repair. The sequence is that of LexA repressor 2 from Pseudomonas syringae pv. tomato (strain ATCC BAA-871 / DC3000).